Consider the following 435-residue polypeptide: Tol-Pal system protein TolB (435 aa).

Positions methionine 1–alanine 26 are cleaved as a signal peptide.

This sequence belongs to the TolB family. As to quaternary structure, the Tol-Pal system is composed of five core proteins: the inner membrane proteins TolA, TolQ and TolR, the periplasmic protein TolB and the outer membrane protein Pal. They form a network linking the inner and outer membranes and the peptidoglycan layer.

It localises to the periplasm. Functionally, part of the Tol-Pal system, which plays a role in outer membrane invagination during cell division and is important for maintaining outer membrane integrity. The chain is Tol-Pal system protein TolB from Agrobacterium fabrum (strain C58 / ATCC 33970) (Agrobacterium tumefaciens (strain C58)).